Here is a 746-residue protein sequence, read N- to C-terminus: MEPSRAPVLGRLLPPLLLLLLPLYPRTRAKYVRGNLSSKEDWVFLTRFCFLSDYGRLDFRFRYPEAKCCQNILLYFDDPSQWPAVYKARDKDCLAKESVIRPENNQVINLTTQYAWSGCQVVSEEGTRYLSCSSGRSFRSVRERWWYIALSKCGGDGLQLEYEMVLTNGKSFWTRHFSADEFGILETDVTFLLIFTLIFVLSCYFGYLLKGRQLLHTTYKMFMAAAGVEVLSLLFFCIYWGQYATDGIGNGSVKILAKLLFSSSFLIFLLTLILLGKGFTVTRGRISHSGSVKLSVYMTLYTLTHVVLLIYEAEFFDPGQVLYTYESPAGYGLIGLQVAAYVWFCYAVLVSLRHYPEKQPFYVPFFAAYTLWFFAVPVMALIANFGIPKWAREKIVNGIQLGIHLYAHGVFLIMTRPSAANKNFPYHVRTSQIASAGVPGPGGSQSADKAFPQHVYGNVTFISDSVPNFTELFSIPPPTSSAGKQVEETAVAAAVAPRGRVVTMAEPGAASPPPPARFSKAVHSGWDGPTPSYQPLVPPEQRRGKPASPNTSACTQPGALHPRSEHPFPASAPRAAHRAPAGLRNPVSLPAQGLGHARHPAPLPHPAPTLDALRPAPFPLVPNGPAGAVLRVPSLSPCPEWLRNLDSRCSVISAPLTPFETSDPAGLRNTRDDRLDPARPSRTLRPSSHCLETDIVKLVSTLKPSLGFVTSDLCFVRPSECQGPSHGLWQKDVFSSCQNKEDSLSF.

A helical transmembrane segment spans residues 9-29 (LGRLLPPLLLLLLPLYPRTRA). N35 is a glycosylation site (N-linked (GlcNAc...) asparagine). 2 helical membrane-spanning segments follow: residues 189 to 209 (VTFLLIFTLIFVLSCYFGYLL) and 221 to 241 (MFMAAAGVEVLSLLFFCIYWG). A glycan (N-linked (GlcNAc...) asparagine) is linked at N250. Helical transmembrane passes span 255–275 (ILAKLLFSSSFLIFLLTLILL), 296–316 (VYMTLYTLTHVVLLIYEAEFF), 332–352 (GLIGLQVAAYVWFCYAVLVSL), 363–383 (VPFFAAYTLWFFAVPVMALIA), and 395–415 (IVNGIQLGIHLYAHGVFLIMT). N-linked (GlcNAc...) asparagine glycosylation occurs at N458. Disordered regions lie at residues 505–604 (AEPG…APLP) and 662–684 (SDPAGLRNTRDDRLDPARPSRTL). Residues 567-581 (PFPASAPRAAHRAPA) are compositionally biased toward low complexity. The segment covering 669–679 (NTRDDRLDPAR) has biased composition (basic and acidic residues).

The protein resides in the membrane. This chain is Transmembrane protein 145 (Tmem145), found in Mus musculus (Mouse).